A 437-amino-acid chain; its full sequence is Elongation factor 1-gamma-B (437 aa).

In terms of domain architecture, GST N-terminal spans 2 to 87 (AGGTLYTYPD…YVANDELRGS (86 aa)). The region spanning 89–222 (NRLHQAQVIQ…KMAQFDAKKF (134 aa)) is the GST C-terminal domain. Residues 225–240 (VQPKKETPKKEKPAKE) are compositionally biased toward basic and acidic residues. The segment at 225–279 (VQPKKETPKKEKPAKEPKKKKKKKKKATPAPAPAPEDDLDESEKALAAEPKSKDP) is disordered. Residues 241-251 (PKKKKKKKKKA) are compositionally biased toward basic residues. The segment covering 266–279 (SEKALAAEPKSKDP) has biased composition (basic and acidic residues). Residues 276–437 (SKDPYAHLPK…KAFNQGKIFK (162 aa)) form the EF-1-gamma C-terminal domain.

EF-1 is composed of four subunits: alpha, beta, delta, and gamma.

In terms of biological role, probably plays a role in anchoring the complex to other cellular components. The chain is Elongation factor 1-gamma-B (eef1g-b) from Xenopus laevis (African clawed frog).